Consider the following 93-residue polypeptide: Large ribosomal subunit protein bL31 (93 aa).

The disordered stretch occupies residues 68 to 93 (GSADAAADEKKPDAKNNNKDNTSKED). Positions 74–93 (ADEKKPDAKNNNKDNTSKED) are enriched in basic and acidic residues.

It belongs to the bacterial ribosomal protein bL31 family. Type A subfamily. As to quaternary structure, part of the 50S ribosomal subunit.

In terms of biological role, binds the 23S rRNA. The sequence is that of Large ribosomal subunit protein bL31 from Prochlorococcus marinus (strain MIT 9313).